Reading from the N-terminus, the 207-residue chain is Suppressor of IKBKE 1 (207 aa).

Coiled-coil stretches lie at residues 4–32 (TIDKILQDAKTLLERLKDHDNAAESLIDQ) and 154–193 (DAIQLDEDKAYNIQEKLAQLELENKELREILSTSKESLHS). Residues 186–207 (TSKESLHSSKRESEWNFSEKTQ) are disordered. Residues 189-199 (ESLHSSKRESE) show a composition bias toward basic and acidic residues.

It belongs to the SIKE family. In terms of assembly, interacts with IKBKE and TBK1 via its coiled coil region. Interaction with TBK1 is disrupted upon viral infection or TLR3 stimulation. Interacts with CDC42BPB. Associates with the STRIPAK core complex composed of PP2A catalytic and scaffolding subunits, the striatins (PP2A regulatory subunits), the striatin-associated proteins MOB4, STRIP1 and STRIP2, PDCD10 and members of the STE20 kinases, such as STK24 and STK26.

Its function is as follows. Suppressor of IKK-epsilon. Associates with the striatin-interacting phosphatase and kinase (STRIPAK) core complex, forming the extended (SIKE1:SLMAP)STRIPAK complex. The (SIKE1:SLMAP)STRIPAK complex dephosphorylates STK3 leading to the inhibition of Hippo signaling and the control of cell growth. This chain is Suppressor of IKBKE 1 (sike1), found in Xenopus tropicalis (Western clawed frog).